Here is a 705-residue protein sequence, read N- to C-terminus: FAD-dependent monooxygenase ATEG_03635 (705 aa).

Residues 86–115 (DVLICGAGPFGLELGLILARQGISFRIVDK), V208, 308–310 (RFY), and S408 each bind FAD.

This sequence belongs to the PheA/TfdB FAD monooxygenase family. Requires FAD as cofactor.

The protein operates within secondary metabolite biosynthesis. Its function is as follows. FAD-dependent monooxygenase; part of the cluster A that mediates the biosynthesis of azasperpyranones, members of the azaphilone family that exhibit anti-cancer activities. Azasperpyranones are synthesized by 2 clusters, A and B. Cluster A is responsible for the production of the polyhydric phenol moiety while the azaphilonoid scaffold is produced by the cluster B. The non-reducing polyketide synthase ATEG_03629 produces 5-methyl orsellinic acid, which is then reduced to 5-methyl orsellinic aldehyde by the NRPS-like protein ATEG_03630. 5-methyl orsellinic aldehyde is then first hydroxylated by the FAD-dependent monooxygenase ATEG_03635 and subsequently hydroxylated by the cytochrome P450 monooxygenase ATEG_03631 to produce the unstable polyhydric phenol precursor of azasperpyranones. On the other hand, the polyketide synthase ATEG_07659 is responsible for producing the 3,5-dimethyloctadienone moiety from acetyl-CoA, three malonyl-CoA, and two S-adenosyl methionines (SAM). The 3,5-dimethyloctadienone moiety is then loaded onto the SAT domain of ATEG_07661 and extended with four malonyl-CoA and one SAM, which leads to the formation of 2,4-dihydroxy-6-(5,7-dimethyl-2-oxo-trans-3-trans-5-nonadienyl)-3-methylbenzaldehyde (compound 8) after reductive release and aldol condensation. The FAD-dependent monooxygenase ATEG_07662 is the next enzyme in the biosynthesis sequence and hydroxylates the side chain at the benzylic position of compound 8. In Aspergillus nidulans, afoF, the ortholog of the FAD-dependent oxygenase ATEG_07660, is the key enzyme for the biosynthesis of asperfuranone by catalyzing the hydroxylation at C-8 of to prevent the formation of a six-membered ring hemiacetal intermediate and thus facilitating the formation of a five-membered ring to produce asperfuranone. In Aspergillus terreus, ATEG_07660 is probably not functional, which leads to the formation of the six-membered ring hemiacetal intermediate presperpyranone instead of asperfuranone. Finally, ATEG_03636 is involved in the condensation of the polyhydric phenol moiety produced by cluster A and the perasperpyranone precursor produced by cluster B, to yield azasperpyranone A. Further modifications of azasperpyranone A result in the production of derivatives, including azasperpyranone B to F. The sequence is that of FAD-dependent monooxygenase ATEG_03635 from Aspergillus terreus (strain NIH 2624 / FGSC A1156).